The chain runs to 445 residues: Mutanase Pc12g07500 (445 aa).

The N-terminal stretch at 1-21 is a signal peptide; it reads MIWKSLFSALAILTHILPALT. Asparagine 386 and asparagine 437 each carry an N-linked (GlcNAc...) asparagine glycan.

This sequence belongs to the glycosyl hydrolase 71 family. As to quaternary structure, monomer.

The protein localises to the secreted. It carries out the reaction Endohydrolysis of (1-&gt;3)-alpha-D-glucosidic linkages in isolichenin, pseudonigeran and nigeran.. Functionally, hydrolyzes 1,3-alpha-glucan predominantly into pentasaccharides. May enhance the efficacy of fungal antibiotics by degrading bacterial exopolysaccharides. The chain is Mutanase Pc12g07500 from Penicillium rubens (strain ATCC 28089 / DSM 1075 / NRRL 1951 / Wisconsin 54-1255) (Penicillium chrysogenum).